A 420-amino-acid chain; its full sequence is Trophoblast glycoprotein (420 aa).

The signal sequence occupies residues 1–31 (MPGGCSRGPAAGDGRLRLARLALVLLGWVSS). Residues 32-355 (SSPTSSASSF…PILPPSLQTS (324 aa)) lie on the Extracellular side of the membrane. An LRRNT domain is found at 53 to 91 (SAQPPLPDQCPALCECSEAARTVKCVNRNLTEVPTDLPA). 2 disulfide bridges follow: cysteine 62–cysteine 68 and cysteine 66–cysteine 77. A glycan (N-linked (GlcNAc...) asparagine) is linked at asparagine 81. LRR repeat units lie at residues 92 to 113 (YVRN…AFAR), 116 to 139 (PLAE…GAFE), 141 to 163 (LPSL…FAFS), 172 to 204 (PSPL…AALL), 209 to 232 (LQGL…VLAQ), 233 to 255 (LPSL…VSFR), and 256 to 275 (NLTH…VLHN). Asparagine 124 is a glycosylation site (N-linked (GlcNAc...) asparagine). Residue asparagine 275 is glycosylated (N-linked (GlcNAc...) asparagine). Residues 283–346 (GLPHIRVFLD…LNSADLDCDP (64 aa)) enclose the LRRCT domain. Disulfide bonds link cysteine 298–cysteine 323 and cysteine 300–cysteine 344. A helical membrane pass occupies residues 356 to 376 (YVFLGIVLALIGAIFLLVLYL). Residues 377-420 (NRKGIKKWMHNIRDACRDHMEGYHYRYEINADPRLTNLSSNSDV) are Cytoplasmic-facing. Serine 418 bears the Phosphoserine mark.

Highly glycosylated. In terms of tissue distribution, expressed by all types of trophoblasts as early as 9 weeks of development. Specific for trophoblastic cells except for amniotic epithelium. In adult tissues, the expression is limited to a few epithelial cell types but is found on a variety of carcinoma.

Its subcellular location is the cell membrane. Functionally, may function as an inhibitor of Wnt/beta-catenin signaling by indirectly interacting with LRP6 and blocking Wnt3a-dependent LRP6 internalization. This is Trophoblast glycoprotein (TPBG) from Homo sapiens (Human).